A 487-amino-acid chain; its full sequence is Transmembrane protein 161B (487 aa).

N34 is a glycosylation site (N-linked (GlcNAc...) asparagine). Residues 107–127 (LVDFTVAATVVYLVTEVYYNF) traverse the membrane as a helical segment. A glycan (N-linked (GlcNAc...) asparagine) is linked at N135. Transmembrane regions (helical) follow at residues 136 to 156 (ISLV…FSLT) and 169 to 189 (SVCV…LIVT). N-linked (GlcNAc...) asparagine glycosylation occurs at N203. Helical transmembrane passes span 228–248 (FKFF…FPGL), 265–285 (ITQT…LLWV), 305–325 (LMTE…LCAL), 367–387 (VFYY…MLLH), and 459–479 (LSFL…FGLF).

Belongs to the TMEM161 family.

It localises to the cell membrane. In terms of biological role, essential for maintaining normal cardiac rhythm in the developing heart and for neonatal survival. Inhibits potassium and calcium currents in the cardiomyocytes, this assists in timely action potential repolarization and thereby maintains normal cardiac rhythm. The chain is Transmembrane protein 161B (TMEM161B) from Homo sapiens (Human).